Reading from the N-terminus, the 232-residue chain is Orotidine 5'-phosphate decarboxylase (232 aa).

Residues D13, K35, D62–T71, T121, R182, Q191, G211, and R212 each bind substrate. K64 functions as the Proton donor in the catalytic mechanism.

This sequence belongs to the OMP decarboxylase family. Type 1 subfamily. Homodimer.

It catalyses the reaction orotidine 5'-phosphate + H(+) = UMP + CO2. Its pathway is pyrimidine metabolism; UMP biosynthesis via de novo pathway; UMP from orotate: step 2/2. Its function is as follows. Catalyzes the decarboxylation of orotidine 5'-monophosphate (OMP) to uridine 5'-monophosphate (UMP). The sequence is that of Orotidine 5'-phosphate decarboxylase from Acinetobacter baumannii (strain ACICU).